Consider the following 506-residue polypeptide: Anaerobic nitric oxide reductase transcription regulator NorR (506 aa).

Asp-57 is modified (4-aspartylphosphate). The Sigma-54 factor interaction domain maps to 187–416; that stretch reads MIGLSPNMMQ…LEHAIHRAVV (230 aa). ATP contacts are provided by residues 215–222 and 278–287; these read GETGTGKE and ADNGTLFLDE. The H-T-H motif DNA-binding region spans 481 to 500; that stretch reads WAACARALETDVANLHRLAK.

It functions in the pathway nitrogen metabolism; nitric oxide reduction. Functionally, required for the expression of anaerobic nitric oxide (NO) reductase, acts as a transcriptional activator for at least the norVW operon. Activation also requires sigma-54. The sequence is that of Anaerobic nitric oxide reductase transcription regulator NorR from Citrobacter koseri (strain ATCC BAA-895 / CDC 4225-83 / SGSC4696).